The chain runs to 122 residues: MPTVKQLIRNARQPIRNARKTAALKGCPQRRGTCARVYNPKKPNSALRKVARVRLTSGFEITAYIPGIGHNLQEHSVVLVRGGRVKDLPGVRYRIIRGTLDAVAVKNRQQGRLQYGVKKPKK.

The protein belongs to the universal ribosomal protein uS12 family. Part of the 30S ribosomal subunit.

It localises to the plastid. Its subcellular location is the chloroplast. Its function is as follows. With S4 and S5 plays an important role in translational accuracy. Located at the interface of the 30S and 50S subunits. This Triticum aestivum (Wheat) protein is Small ribosomal subunit protein uS12cz/uS12cy (rps12-A).